We begin with the raw amino-acid sequence, 285 residues long: 4-diphosphocytidyl-2-C-methyl-D-erythritol kinase (285 aa).

Lysine 10 is an active-site residue. 94–104 (PVAAGLGGGSS) contacts ATP. Residue aspartate 136 is part of the active site.

This sequence belongs to the GHMP kinase family. IspE subfamily.

It carries out the reaction 4-CDP-2-C-methyl-D-erythritol + ATP = 4-CDP-2-C-methyl-D-erythritol 2-phosphate + ADP + H(+). The protein operates within isoprenoid biosynthesis; isopentenyl diphosphate biosynthesis via DXP pathway; isopentenyl diphosphate from 1-deoxy-D-xylulose 5-phosphate: step 3/6. Catalyzes the phosphorylation of the position 2 hydroxy group of 4-diphosphocytidyl-2C-methyl-D-erythritol. The polypeptide is 4-diphosphocytidyl-2-C-methyl-D-erythritol kinase (Latilactobacillus sakei subsp. sakei (strain 23K) (Lactobacillus sakei subsp. sakei)).